The chain runs to 2439 residues: Centrosomal protein of 290 kDa (2439 aa).

2 coiled-coil regions span residues 75-913 and 1271-1576; these read AEQA…VVTE and NTML…YMDT. Disordered regions lie at residues 1802 to 1824, 1867 to 1890, and 2017 to 2048; these read ETLN…EKEA, ELDR…KSSK, and ESRL…FQKE. Basic and acidic residues predominate over residues 2039–2048; the sequence is SQREHEFQKE. The stretch at 2046 to 2394 forms a coiled coil; the sequence is QKENLRLSTE…KLTQELKHFD (349 aa).

As to quaternary structure, part of the tectonic-like complex (also named B9 complex).

Its subcellular location is the cytoplasm. It is found in the cytoskeleton. The protein resides in the microtubule organizing center. It localises to the centrosome. The protein localises to the centriolar satellite. Its subcellular location is the nucleus. It is found in the cilium basal body. Involved in early and late steps in cilia formation. May play a role in early ciliogenesis in the disappearance of centriolar satellites and in the transition of primary ciliar vesicles (PCVs) to capped ciliary vesicles (CCVs). In the ciliary transition zone is part of the tectonic-like complex which is required for tissue-specific ciliogenesis and may regulate ciliary membrane composition. Involved in regulation of the BBSome complex integrity and in ciliary targeting of selected BBSome cargos. Required for the correct localization of ciliary and phototransduction proteins in retinal photoreceptor cells; may play a role in ciliary transport processes. Involved in development of the nervous system and kidney. The chain is Centrosomal protein of 290 kDa (cep290) from Danio rerio (Zebrafish).